The following is a 78-amino-acid chain: Probable Vpr-like protein (78 aa).

The Nuclear export signal motif lies at 35–43 (AIRLLQGLF). The Nuclear localization signal signature appears at 45 to 54 (RYRFKKPRVD).

The protein localises to the virion. Its subcellular location is the host nucleus. Functionally, seems to function as a Vpr-like protein, since it mediates host cell cycle arrest in G2 phase. Cell cycle arrest creates a favorable environment for maximizing viral expression and production. This chain is Probable Vpr-like protein, found in Feline immunodeficiency virus (isolate Petaluma) (FIV).